The following is a 90-amino-acid chain: UPF0335 protein bsl7135 (90 aa).

The protein belongs to the UPF0335 family.

The sequence is that of UPF0335 protein bsl7135 from Bradyrhizobium diazoefficiens (strain JCM 10833 / BCRC 13528 / IAM 13628 / NBRC 14792 / USDA 110).